A 1293-amino-acid chain; its full sequence is MEIIRGAPALSAFRVQKLMEACENAALPVSQIYAEYVHLASLSEPLDDNERLQLETILTYGPAIESHAPQGTLLFVTPRPGTISPWSSKATDIAHNCGLGKVSRLERGIAYYVEASVLTAEQQKLLQGLLHDRMVEVMLPAFEAAEVLFARTEPAKFSSVNILAEGRRALEVANIKLGLALADDEIDYLIENFVRLKRNPNDIELMMFAQANSEHCRHKIFNADWTIDGEVQLKSLFKMIKNTFEVTPDYVLSAYKDNAAVMTGSVAGRFFPDPDGIYNYHTEPMHILMKVETHNHPTAISPYPGAATGSGGEIRDEGATGRGSKPKAGLSGFTVSNLKIPGFVQPWEGDYGKPDRIVTPLEIMLEGPLGGAAFNNEFGRPAITGYFRTYEQLVSSHNGVEVRGYHKPIMIAGGLGNIREDHVQKGEITIGAKLIVLGGPAMNIGLGGGAASSMASGQSSEDLDFASVQRENPEMERRCQEVIDRCWQLGDTNPIQFIHDVGAGGLSNAFPELVNDADRGGVFNLRNVPSDEPGMSPLEIWCNESQERYVLSVAPENLQQFADICARERAPFAVVGEATAEMHLTLADSHFNNKPIDLPLEVLLGKAPKMSRDVVTAKAVSPALDQTKIELKDAVKRILTLPTVADKTFLITIGDRSVTGLVNRDQMVGPWQVPVADCAVTASSYDSYCGEAMSMGERTPLALLDFDASARMAVAESIMNIAGTDIGSFKRIKLSANWMSPAGHPGEDAGLYQAVKAIGEDLCPELGITIPVGKDSMSMKTAWEDNGTQKTVTSPMSLVITAFGVVQDIRKTVTPQLRSDKGDSALLMLDLSNGQNRLGGSCLAQVYSELGDIAPTLDKTANLAGFFEVMQQLVADQAVMAYHDRSDGGLFTTLVEMAFAGNTGLTIDLASLSGTDLERLFNEEIGAVIQVSAIDAKAIAAQFEAKGVTCHHIGGLQTADKISINDGERVIFADSRTALRTLWSETTYRMQALRDNPECAREEYELKQQADAPGLTVKLGFNPSEDVAAPYILKGVAPKMAILREQGVNSHVEMAAAFDRAGFESRDVHMSDILSGRISLEEFQGLVACGGFSYGDVLGAGEGWAKSILFNDRARDEFSRFFERDSSIALGVCNGCQMLSNLKEIIPGSEHWPRFVRNRSERFEARFSLVEVQQNPSVFFEGMVGSRMPIAVSHGEGLVEFANAQALANAEASGTIALRYVDGHGQIATQYPENPNGSANGLTGICTTDGRVTIMMPHPERVFRTVANSWHPDNWGEDSPWMRMFRNARVKIG.

ATP is bound by residues 305–316, 384–386, and alanine 676; these read GAATGSGGEIRD and TGY. Residues 307–326 are disordered; sequence ATGSGGEIRDEGATGRGSKP. Aspartate 677, glutamate 716, asparagine 720, and aspartate 884 together coordinate Mg(2+). An ATP-binding site is contributed by serine 886. Positions 1040–1293 constitute a Glutamine amidotransferase type-1 domain; that stretch reads MAILREQGVN…MFRNARVKIG (254 aa). Cysteine 1133 functions as the Nucleophile in the catalytic mechanism. Catalysis depends on residues histidine 1258 and glutamate 1260.

In the N-terminal section; belongs to the FGAMS family. Monomer.

It localises to the cytoplasm. The enzyme catalyses N(2)-formyl-N(1)-(5-phospho-beta-D-ribosyl)glycinamide + L-glutamine + ATP + H2O = 2-formamido-N(1)-(5-O-phospho-beta-D-ribosyl)acetamidine + L-glutamate + ADP + phosphate + H(+). The protein operates within purine metabolism; IMP biosynthesis via de novo pathway; 5-amino-1-(5-phospho-D-ribosyl)imidazole from N(2)-formyl-N(1)-(5-phospho-D-ribosyl)glycinamide: step 1/2. Phosphoribosylformylglycinamidine synthase involved in the purines biosynthetic pathway. Catalyzes the ATP-dependent conversion of formylglycinamide ribonucleotide (FGAR) and glutamine to yield formylglycinamidine ribonucleotide (FGAM) and glutamate. In Shewanella frigidimarina (strain NCIMB 400), this protein is Phosphoribosylformylglycinamidine synthase.